A 199-amino-acid polypeptide reads, in one-letter code: MAWYWWRRRRRRGWWKPRRRRWRRRRARRRGPARRHRARRRIVRHPCNGQTSSGNRVPRSVQAVDPKYVSLQLVWHSWDFRRGLFGQAGIKRMQQESDALTLSPVHRPKRPKRDTQVKEKTPEKDSDSAVQLRRLQPWIHSSQETKDEEEEIPEGPVQEQLLQQLQQQRLLRVQLESIAQEVLKIRRGHSLHPLLSSHA.

Residues 96–155 form a disordered region; that stretch reads ESDALTLSPVHRPKRPKRDTQVKEKTPEKDSDSAVQLRRLQPWIHSSQETKDEEEEIPEG. Over residues 113–127 the composition is skewed to basic and acidic residues; that stretch reads RDTQVKEKTPEKDSD.

This is ORF1/1 protein from Torque teno virus (isolate Human/Finland/Hel32/2002) (TTV).